A 191-amino-acid polypeptide reads, in one-letter code: Glutathione S-transferase Y-2 (191 aa).

The GST N-terminal domain maps to 2 to 80 (TFATVYIKPH…YIVAKGSKPE (79 aa)). A GST C-terminal domain is found at 85-191 (TTEERATNTR…VSQHPIIKNM (107 aa)).

It belongs to the GST superfamily.

The enzyme catalyses RX + glutathione = an S-substituted glutathione + a halide anion + H(+). Its function is as follows. Conjugation of reduced glutathione to a wide number of exogenous and endogenous hydrophobic electrophiles. The protein is Glutathione S-transferase Y-2 (GSTY2) of Pichia kudriavzevii (Yeast).